We begin with the raw amino-acid sequence, 169 residues long: MKYGIVLFPSKKLQDIANSYRKRYDPNYALIPPHLTLRTPFEVSEDEISGVVRHLRELSKELKPVTLKITKFSSFAPVNNVIYMKAEPTEELMQLHEKMYSGVLEDKPEYAFVPHVTVAQKLSDDEHSDVLGTLKMRDASHEEVIDRFHLLYQLDNGSWTVYETFILGA.

The Proton donor role is filled by histidine 34. Short sequence motifs (HXTX) lie at residues 34–37 and 115–118; these read HLTL and HVTV. The Proton acceptor role is filled by histidine 115.

This sequence belongs to the 2H phosphoesterase superfamily. YjcG family.

The sequence is that of Putative phosphoesterase BLi01284/BL02661 from Bacillus licheniformis (strain ATCC 14580 / DSM 13 / JCM 2505 / CCUG 7422 / NBRC 12200 / NCIMB 9375 / NCTC 10341 / NRRL NRS-1264 / Gibson 46).